A 340-amino-acid polypeptide reads, in one-letter code: Gallate dioxygenase (340 aa).

Residue histidine 45 is the Proton donor of the active site. Histidine 113 acts as the Proton acceptor in catalysis.

This sequence belongs to the LigB/MhpB extradiol dioxygenase family. It depends on Fe(2+) as a cofactor.

The enzyme catalyses 3,4,5-trihydroxybenzoate + O2 = (1E)-4-oxobut-1-ene-1,2,4-tricarboxylate + 2 H(+). Ring-cleavage dioxygenase that acts specifically on gallate to produce the keto-tautomer of 4-oxalomesaconate. Mediates the first step of gallate degradation pathway. In Pseudomonas putida (strain ATCC 47054 / DSM 6125 / CFBP 8728 / NCIMB 11950 / KT2440), this protein is Gallate dioxygenase (galA).